The following is a 1345-amino-acid chain: MESKALLAVALWFCVETRAASVGLPGDFLHPPKLSTQKDILTILANTTLQITCRGQRDLDWLWPNAQRDSEERVLVTECGGGDSIFCKTLTIPRVVGNDTGAYKCSYRDVDIASTVYVYVRDYRSPFIASVSDQHGIVYITENKNKTVVIPCRGSISNLNVSLCARYPEKRFVPDGNRISWDSEIGFTLPSYMISYAGMVFCEAKINDETYQSIMYIVVVVGYRIYDVILSPPHEIELSAGEKLVLNCTARTELNVGLDFTWHSPPSKSHHKKIVNRDVKPFPGTVAKMFLSTLTIESVTKSDQGEYTCVASSGRMIKRNRTFVRVHTKPFIAFGSGMKSLVEATVGSQVRIPVKYLSYPAPDIKWYRNGRPIESNYTMIVGDELTIMEVTERDAGNYTVILTNPISMEKQSHMVSLVVNVPPQIGEKALISPMDSYQYGTMQTLTCTVYANPPLHHIQWYWQLEEACSYRPGQTSPYACKEWRHVEDFQGGNKIEVTKNQYALIEGKNKTVSTLVIQAANVSALYKCEAINKAGRGERVISFHVIRGPEITVQPAAQPTEQESVSLLCTADRNTFENLTWYKLGSQATSVHMGESLTPVCKNLDALWKLNGTMFSNSTNDILIVAFQNASLQDQGDYVCSAQDKKTKKRHCLVKQLIILERMAPMITGNLENQTTTIGETIEVTCPASGNPTPHITWFKDNETLVEDSGIVLRDGNRNLTIRRVRKEDGGLYTCQACNVLGCARAETLFIIEGAQEKTNLEVIILVGTAVIAMFFWLLLVIVLRTVKRANEGELKTGYLSIVMDPDELPLDERCERLPYDASKWEFPRDRLKLGKPLGRGAFGQVIEADAFGIDKTATCKTVAVKMLKEGATHSEHRALMSELKILIHIGHHLNVVNLLGACTKPGGPLMVIVEFCKFGNLSTYLRGKRNEFVPYKSKGARFRQGKDYVGELSVDLKRRLDSITSSQSSASSGFVEEKSLSDVEEEEASEELYKDFLTLEHLICYSFQVAKGMEFLASRKCIHRDLAARNILLSEKNVVKICDFGLARDIYKDPDYVRKGDARLPLKWMAPETIFDRVYTIQSDVWSFGVLLWEIFSLGASPYPGVKIDEEFCRRLKEGTRMRAPDYTTPEMYQTMLDCWHEDPNQRPSFSELVEHLGNLLQANAQQDGKDYIVLPMSETLSMEEDSGLSLPTSPVSCMEEEEVCDPKFHYDNTAGISHYLQNSKRKSRPVSVKTFEDIPLEEPEVKVIPDDSQTDSGMVLASEELKTLEDRNKLSPSFGGMMPSKSRESVASEGSNQTSGYQSGYHSDDTDTTVYSSDEAGLLKMVDAAVHADSGTTLRSPPV.

Positions M1–A19 are cleaved as a signal peptide. The Extracellular segment spans residues A20–E762. N-linked (GlcNAc...) asparagine glycans are attached at residues N46, N98, N145, N160, and N247. 7 consecutive Ig-like C2-type domains span residues N46–D111, N143–E209, Y226–R325, P330–S416, P423–S542, P549–Q656, and P665–I751. A disulfide bridge connects residues C53 and C105. Residues C152 and C202 are joined by a disulfide bond. The cysteines at positions 248 and 309 are disulfide-linked. N-linked (GlcNAc...) asparagine glycans are attached at residues N320, N376, N397, N509, N521, N578, N611, N617, N629, N673, N702, and N719. 2 disulfide bridges follow: C447–C528 and C569–C640. C686 and C735 form a disulfide bridge. A helical membrane pass occupies residues V763–V783. Topologically, residues L784 to V1345 are cytoplasmic. Phosphotyrosine is present on Y799. The region spanning L832–N1160 is the Protein kinase domain. ATP is bound by residues L838 to V846 and K866. Y949 is subject to Phosphotyrosine; by autocatalysis. Phosphoserine is present on residues S980 and S982. Y994 carries the post-translational modification Phosphotyrosine; by autocatalysis. Cysteines 1022 and 1043 form a disulfide. Catalysis depends on D1026, which acts as the Proton acceptor. A phosphotyrosine; by autocatalysis mark is found at Y1052, Y1057, Y1173, and Y1212. 2 positions are modified to phosphoserine: S1229 and S1233. At T1236 the chain carries Phosphothreonine. Positions D1272–V1316 are disordered. The segment covering S1294–Y1307 has biased composition (polar residues). Y1303, Y1307, and Y1317 each carry phosphotyrosine; by autocatalysis.

It belongs to the protein kinase superfamily. Tyr protein kinase family. CSF-1/PDGF receptor subfamily. As to quaternary structure, homodimer in the presence of bound dimeric VEGFA, VEGFC or VEGFD ligands; monomeric in the absence of bound ligands. Can also form heterodimers with FLT1/VEGFR1 and KDR/VEGFR2. Interacts (tyrosine phosphorylated) with LFYN, NCK1, PLCG1. Interacts (tyrosine-phosphorylated active form preferentially) with DAB2IP (via C2 domain and active form preferentially); the interaction occurs at the late phase of VEGFA response and inhibits KDR/VEGFR2 activity. Interacts with SHBSH2D2A/TSAD, GRB2, MYOF, CBL and PDCD6. Interacts (via C-terminus domain) with ERN1 (via kinase domain); the interaction is facilitated in a XBP1 isoform 1- and vascular endothelial growth factor (VEGF)-dependent manner in endothelial cells. Interacts (via juxtamembrane region) with chaperone PDCL3 (via thioredoxin fold region); the interaction leads to increased KDR/VEGFR2 abundance through inhibition of its ubiquitination and degradation. Interacts (tyrosine phosphorylated) with CCDC88A/GIV (via SH2-like region); binding requires autophosphorylation of the KDR/VEGFR2 C-terminal region. Interacts with isoform 2 of BSG. Interacts with SLC31A1; this interaction is induced upon VEGFA stimulation leading to SLC31A1 and KDR subsequent co-internalization to early endosomes, thereby activating KDR downstream signaling in endothelial cells. In terms of processing, N-glycosylated. Post-translationally, ubiquitinated. Tyrosine phosphorylation of the receptor promotes its poly-ubiquitination, leading to its degradation via the proteasome or lysosomal proteases. Autophosphorylated on tyrosine residues upon ligand binding. Autophosphorylation occurs in trans, i.e. one subunit of the dimeric receptor phosphorylates tyrosine residues on the other subunit. Phosphorylation at Tyr-949 is important for interaction with SH2D2A/TSAD and VEGFA-mediated reorganization of the actin cytoskeleton. Phosphorylation at Tyr-1173 is important for interaction with PLCG1 and SHB. Phosphorylation at Tyr-1212 is important for interaction with NCK1 and FYN. Dephosphorylated by PTPRJ at Tyr-799, Tyr-949, Tyr-994, Tyr-1052, Tyr-1057, Tyr-1173 and Tyr-1212. In terms of processing, the inhibitory disulfide bond between Cys-1022 and Cys-1043 may serve as a specific molecular switch for H(2)S-induced modification that regulates KDR/VEGFR2 function. In terms of tissue distribution, expressed in endothelial cells (at protein level). Detected in embryonic endothelial cells, as well as hematopoietic stem and progenitor cells. Detected in vascular endothelium. Expressed at high levels in adult heart, lung, kidney, brain and skeletal muscle, but is also expressed at lower levels in most other adult tissues.

It is found in the cell junction. Its subcellular location is the endoplasmic reticulum. The protein localises to the cell membrane. The protein resides in the cytoplasm. It localises to the nucleus. It is found in the cytoplasmic vesicle. Its subcellular location is the early endosome. The protein localises to the secreted. The catalysed reaction is L-tyrosyl-[protein] + ATP = O-phospho-L-tyrosyl-[protein] + ADP + H(+). Present in an inactive conformation in the absence of bound ligand. Binding of VEGFA, VEGFC or VEGFD leads to dimerization and activation by autophosphorylation on tyrosine residues. May be regulated by hydrogen sulfide (H(2)S) levels via a sensitive intracellular disulfide bond. Its function is as follows. Tyrosine-protein kinase that acts as a cell-surface receptor for VEGFA, VEGFC and VEGFD. Plays an essential role in the regulation of angiogenesis, vascular development, vascular permeability, and embryonic hematopoiesis. Promotes proliferation, survival, migration and differentiation of endothelial cells. Promotes reorganization of the actin cytoskeleton. Isoforms lacking a transmembrane domain, such as isoform 2, may function as decoy receptors for VEGFA, VEGFC and/or VEGFD. Isoform 2 plays an important role as a negative regulator of VEGFA- and VEGFC-mediated lymphangiogenesis by limiting the amount of free VEGFA and/or VEGFC and by preventing their binding to FLT4. Modulates FLT1 and FLT4 signaling by forming heterodimers. Binding of vascular growth factors to isoform 1 leads to the activation of several signaling cascades. Activation of PLCG1 leads to the production of the cellular signaling molecules diacylglycerol and inositol 1,4,5-trisphosphate and the activation of protein kinase C. Mediates activation of MAPK1/ERK2, MAPK3/ERK1 and the MAP kinase signaling pathway, as well as of the AKT1 signaling pathway. Mediates phosphorylation of PIK3R1, the regulatory subunit of phosphatidylinositol 3-kinase, reorganization of the actin cytoskeleton and activation of PTK2/FAK1. Required for VEGFA-mediated induction of NOS2 and NOS3, leading to the production of the signaling molecule nitric oxide (NO) by endothelial cells. Phosphorylates PLCG1. Promotes phosphorylation of FYN, NCK1, NOS3, PIK3R1, PTK2/FAK1 and SRC. This chain is Vascular endothelial growth factor receptor 2, found in Mus musculus (Mouse).